A 342-amino-acid chain; its full sequence is Ferredoxin--NADP reductase (342 aa).

Residues Cys17, Asp36, Gln44, Tyr49, Val89, Phe124, Asp289, and Thr330 each coordinate FAD.

This sequence belongs to the ferredoxin--NADP reductase type 2 family. Homodimer. The cofactor is FAD.

The catalysed reaction is 2 reduced [2Fe-2S]-[ferredoxin] + NADP(+) + H(+) = 2 oxidized [2Fe-2S]-[ferredoxin] + NADPH. The chain is Ferredoxin--NADP reductase from Rhodopseudomonas palustris (strain ATCC BAA-98 / CGA009).